Reading from the N-terminus, the 661-residue chain is MEHHHHHRHMHSPSSQQHEHQQHQQYQQPPQHHQHYEAPQHQQQHQHHHHQQQQQQHPVPVPKQEQADNTSAPVLSALPAYPTLPPIWDSTHSPALSASSSSTMQASASSLSSLPPLVLHPPSNGLQPNKPRSRSPSSNRFQTREPAPLSLFDGSPTTELPPIQLDRKRSSSDHSLPSIASLNVGSSLPTLQPTPTPQPPPKFVWPNSNPLSAYYAESDNDGRGASPQHRHDRRSTSVSLDDPQVMMAISALNELKTDSVSSPPNRNAPLRRGMTDQNQEPEPLLSLITTAHPIIESTVQRSSHLYTKTKNFSPRIRSGLEYVEGSLIPVADTVNNVGRRTGIESGVRWILGKRTKSSSDTRESGQNKRHMTSRPVNGTGGEARFSEAPTADASRRTSVSTIETLPAYDDQRSPAYSETVEQNGQAVDPKSALHAQLGNGRVQVTTSSLKETMKEESLRSLKYVLETLRDVTNTLQQGTNELSSVLDQYDRSTTTRDGEDHVMTNGSAPEEDRTRLVERMTELRKSIYSNIKDVSSVVANYTGAALPENAGNLVRHHLLSLPMVWSQASKTTTSSEQPNTQDPNALVRKAAKVALSFSKEGLHIFSQIMEIIRTATDHAEDWRNKKMNQMTPANGTEQEIRPLIDQPLPQVATINGDIPMR.

The span at 1-11 (MEHHHHHRHMH) shows a compositional bias: basic residues. Disordered regions lie at residues 1 to 69 (MEHH…QADN), 107 to 243 (SASS…LDDP), 255 to 279 (LKTDSVSSPPNRNAPLRRGMTDQNQ), and 354 to 398 (RTKS…RRTS). Composition is skewed to low complexity over residues 23–43 (HQQYQQPPQHHQHYEAPQHQQ) and 107–140 (SASSLSSLPPLVLHPPSNGLQPNKPRSRSPSSNR). Residues 173-187 (DHSLPSIASLNVGSS) show a composition bias toward polar residues. Residues 192–203 (QPTPTPQPPPKF) are compositionally biased toward pro residues. Residues 357–366 (SSSDTRESGQ) are compositionally biased toward basic and acidic residues.

Its function is as follows. Transcription factor that plays a pivotal role in azole adaptive responses by regulating the drug accumulation in the cells. Affects the transcriptional responses to ketoconazole of many genes, including the target gene (erg11), an azole transporter gene (cdr4), a hexose transporter gene (hxt13), a stress response gene (kts-1), two transcription factor genes (named kts-2 and fsd-1/ndt80). Also regulates phospholipid synthesis that is not involved in azole resistance. This Neurospora crassa (strain ATCC 24698 / 74-OR23-1A / CBS 708.71 / DSM 1257 / FGSC 987) protein is Transcription factor ccg-8.